A 347-amino-acid chain; its full sequence is Gamma-glutamyl hydrolase 2 (347 aa).

The first 22 residues, 1 to 22 (MWSYVWLPLVALSLFKDSIIMA), serve as a signal peptide directing secretion. The Gamma-glutamyl hydrolase domain maps to 45-341 (APDPNLNYRP…IGYDEVYIFT (297 aa)). Cys-155 functions as the Nucleophile in the catalytic mechanism. The Proton donor role is filled by His-268.

The protein belongs to the peptidase C26 family. Expressed in roots, in leaves, stems and siliques.

The protein resides in the vacuole. Its subcellular location is the secreted. It localises to the extracellular space. It is found in the cell wall. The enzyme catalyses (6S)-5,6,7,8-tetrahydrofolyl-(gamma-L-Glu)(n) + (n-1) H2O = (6S)-5,6,7,8-tetrahydrofolate + (n-1) L-glutamate. Its function is as follows. Cleaves the polyglutamate sidechains of folate polyglutamates in the vacuole. Is important for polyglutamyl tail length determination before vacuolar exit. Plays a role on folate stability and intracellular folate content. Has endopeptidase activity against 4-amino-10-methylpteroyl penta-, tetra-, tri- and di-gamma-L-glutamate substrates and is responsible for the production of folic acid, also called pteroylglutamic acid (PteGlu) from teroylpolyglutamates. The polypeptide is Gamma-glutamyl hydrolase 2 (GGH2) (Arabidopsis thaliana (Mouse-ear cress)).